The following is a 430-amino-acid chain: Synaptotagmin-11 (430 aa).

Topologically, residues 1–15 (MAEITNIRPSFDVSP) are vesicular. Residues 16-36 (VAAGLIGASVLVVCVSVTVFV) traverse the membrane as a helical segment. Over 37 to 430 (WTCCHQQAEK…IAKWHSLSEY (394 aa)) the chain is Cytoplasmic. A compositionally biased stretch (basic and acidic residues) spans 79–90 (RRDKDGPRRESG). Disordered stretches follow at residues 79 to 120 (RRDK…CMDQ) and 132 to 152 (RSPMTSLTPGESKATSPSSPE). Ser-133 is modified (phosphoserine). Positions 134-150 (PMTSLTPGESKATSPSS) are enriched in polar residues. C2 domains lie at 156-278 (MLGS…QLTR) and 290-425 (SRGE…AKWH). Residues Asp-249, Ser-252, and Asp-255 each contribute to the Ca(2+) site.

This sequence belongs to the synaptotagmin family. Homodimer. Can also form heterodimers. Interacts with PRKN. Interacts (via C2 2 domain) with AGO2 and SND1; the interaction with SND1 is direct. Interacts with KIF1A; the interaction increases in presence of calcium. The cofactor is Ca(2+). In terms of processing, ubiquitinated, at least by PRKN, and targeted to the proteasome complex for degradation. Ubiquitination is inhibited by ATP13A2. As to expression, expressed in cerebellun, cerebellar cortex, hippocampus, olfactory bulb and spinal cord (at protein level). Expressed by neurons, astrocytes and microglia (at protein level). Expressed in macrophages (at protein level).

The protein resides in the cytoplasmic vesicle membrane. Its subcellular location is the perikaryon. It localises to the golgi apparatus. The protein localises to the trans-Golgi network membrane. It is found in the recycling endosome membrane. The protein resides in the lysosome membrane. Its subcellular location is the cytoplasmic vesicle. It localises to the phagosome. The protein localises to the cell projection. It is found in the axon. The protein resides in the dendrite. Its subcellular location is the postsynaptic density. It localises to the clathrin-coated vesicle membrane. Synaptotagmin family member involved in vesicular and membrane trafficking which does not bind Ca(2+). Inhibits clathrin-mediated and bulk endocytosis, functions to ensure precision in vesicle retrieval. Plays an important role in dopamine transmission by regulating endocytosis and the vesicle-recycling process. Essential component of a neuronal vesicular trafficking pathway that differs from the synaptic vesicle trafficking pathway but is crucial for development and synaptic plasticity. In macrophages and microglia, inhibits the conventional cytokine secretion, of at least IL6 and TNF, and phagocytosis. In astrocytes, regulates lysosome exocytosis, mechanism required for the repair of injured astrocyte cell membrane. Required for the ATP13A2-mediated regulation of the autophagy-lysosome pathway. This Mus musculus (Mouse) protein is Synaptotagmin-11.